The following is a 194-amino-acid chain: Imidazoleglycerol-phosphate dehydratase (194 aa).

This sequence belongs to the imidazoleglycerol-phosphate dehydratase family.

The protein resides in the cytoplasm. It catalyses the reaction D-erythro-1-(imidazol-4-yl)glycerol 3-phosphate = 3-(imidazol-4-yl)-2-oxopropyl phosphate + H2O. Its pathway is amino-acid biosynthesis; L-histidine biosynthesis; L-histidine from 5-phospho-alpha-D-ribose 1-diphosphate: step 6/9. The polypeptide is Imidazoleglycerol-phosphate dehydratase (Thermoanaerobacter sp. (strain X514)).